A 191-amino-acid chain; its full sequence is Syndecan-2-A (191 aa).

The signal sequence occupies residues Met1–Ala22. Over Gln23–Ala137 the chain is Extracellular. Positions Ser32–Asp60 are disordered. 4 O-linked (Xyl...) (glycosaminoglycan) serine glycosylation sites follow: Ser36, Ser48, Ser50, and Ser52. Residues Ala138–Val158 traverse the membrane as a helical segment. The Cytoplasmic portion of the chain corresponds to Tyr159–Ala191. A disordered region spans residues Ser168–Ala191.

It belongs to the syndecan proteoglycan family. In terms of processing, O-glycosylated; contains both heparan sulfate and chondroitin sulfate.

It is found in the membrane. Functionally, cell surface proteoglycan. The chain is Syndecan-2-A (sdc2-a) from Xenopus laevis (African clawed frog).